The chain runs to 290 residues: 3-hydroxyacyl-thioester dehydratase Y (290 aa).

The interval Phe-147–Ile-169 is disordered. The segment covering Arg-151 to Ile-169 has biased composition (basic and acidic residues). Positions Pro-161–Ser-271 constitute a MaoC-like domain.

The protein belongs to the enoyl-CoA hydratase/isomerase family.

It catalyses the reaction a (3R)-3-hydroxyacyl-CoA = a (2E)-enoyl-CoA + H2O. The enzyme catalyses (3R)-hydroxyhexanoyl-CoA = (2E)-hexenoyl-CoA + H2O. It carries out the reaction (2E)-octenoyl-CoA + H2O = (3R)-hydroxyoctanoyl-CoA. The catalysed reaction is (3R)-3-hydroxydecanoyl-CoA = (2E)-decenoyl-CoA + H2O. It catalyses the reaction (3R)-3-hydroxydodecanoyl-CoA = (2E)-dodecenoyl-CoA + H2O. The enzyme catalyses (3R)-hydroxyhexadecanoyl-CoA = (2E)-hexadecenoyl-CoA + H2O. Shows trans-enoyl-CoA hydratase/3-hydroxyacyl-CoA dehydratase activity. In vitro, can hydrate various enoyl-CoA such as (2E)-hexenoyl-CoA, (2E)-octenoyl-CoA, (2E)-decenoyl-CoA, (2E)-dodecenoyl-CoA and (2E)-hexadecenoyl-CoA. May contribute to the persistence of the tuberculosis infection by inducing COX-2 expression in macrophages through MAPK-NF-kappaB signaling pathway. This chain is 3-hydroxyacyl-thioester dehydratase Y, found in Mycobacterium tuberculosis (strain ATCC 25618 / H37Rv).